The chain runs to 366 residues: Caffeic acid 3-O-methyltransferase (366 aa).

Position 131-137 (131-137 (MNQDKIL)) interacts with substrate. A substrate binding region spans residues 163-181 (AFEYHGTDPRFNKIFNRGM). Residues Gly209, Asp232, Asp252, Met253, and Lys266 each contribute to the S-adenosyl-L-methionine site. His270 serves as the catalytic Proton acceptor.

It belongs to the class I-like SAM-binding methyltransferase superfamily. Cation-independent O-methyltransferase family. COMT subfamily. As to quaternary structure, homodimer.

The catalysed reaction is (E)-caffeate + S-adenosyl-L-methionine = (E)-ferulate + S-adenosyl-L-homocysteine + H(+). The protein operates within aromatic compound metabolism; phenylpropanoid biosynthesis. Its function is as follows. Catalyzes the conversion of caffeic acid to ferulic acid and of 5-hydroxyferulic acid to sinapic acid. The resulting products may subsequently be converted to the corresponding alcohols that are incorporated into lignins. The polypeptide is Caffeic acid 3-O-methyltransferase (OMT) (Eucalyptus gunnii (Cider gum)).